A 242-amino-acid polypeptide reads, in one-letter code: Protein odd-skipped-related 1 (242 aa).

C2H2-type zinc fingers lie at residues 128 to 150 (FICK…ERTH), 156 to 178 (FHCE…KYIH), and 184 to 207 (HKCE…SCHH).

It belongs to the Odd C2H2-type zinc-finger protein family.

The protein resides in the nucleus. Its function is as follows. May function as transcription regulator. Essential for larval development. Required for morphogenesis and function of the digestive tract. The chain is Protein odd-skipped-related 1 from Caenorhabditis elegans.